The following is a 523-amino-acid chain: MAGVSYAAPWWVSLLHRLPHFDLSWEATSSQFRPEDTDYQQALLLLGAAALACLALDLLFLLFYSFWLCCRRRKSEEHLDADCCCTAWCVIIATLVCSAGIAVGFYGNGETSDGIHRATYSLRHANRTVAGVQDRVWDTAVGLNHTAEPSLQTLERQLAGRPEPLRAVQRLQGLLETLLGYTAAIPFWRNTAVSLEVLAEQVDLYDWYRWLGYLGLLLLDVIICLLVLVGLIRSSKGILVGVCLLGVLALVISWGALGLELAVSVGSSDFCVDPDAYVTKMVEEYSVLSGDILQYYLACSPRAANPFQQKLSGSHKALVEMQDVVAELLRTVPWEQPATKDPLLRVQEVLNGTEVNLQHLTALVDCRSLHLDYVQALTGFCYDGVEGLIYLALFSFVTALMFSSIVCSVPHTWQQKRGPDEDGEEEAAPGPRQAHDSLYRVHMPSLYSCGSSYGSETSIPAAAHTVSNAPVTEYMSQNANFQNPRCENTPLIGRESPPPSYTSSMRAKYLATSQPRPDSSGSH.

Over 1–42 (MAGVSYAAPWWVSLLHRLPHFDLSWEATSSQFRPEDTDYQQA) the chain is Extracellular. A helical membrane pass occupies residues 43–63 (LLLLGAAALACLALDLLFLLF). Residues 64–86 (YSFWLCCRRRKSEEHLDADCCCT) lie on the Cytoplasmic side of the membrane. The chain crosses the membrane as a helical span at residues 87–107 (AWCVIIATLVCSAGIAVGFYG). Topologically, residues 108 to 211 (NGETSDGIHR…VDLYDWYRWL (104 aa)) are extracellular. Positions 110 and 113 each coordinate Ca(2+). 2 N-linked (GlcNAc...) asparagine glycosylation sites follow: N126 and N144. A helical transmembrane segment spans residues 212 to 232 (GYLGLLLLDVIICLLVLVGLI). Over 233–236 (RSSK) the chain is Cytoplasmic. The chain crosses the membrane as a helical span at residues 237–257 (GILVGVCLLGVLALVISWGAL). At 258–386 (GLELAVSVGS…LTGFCYDGVE (129 aa)) the chain is on the extracellular side. 2 disulfide bridges follow: C271-C381 and C299-C366. Residue N351 is glycosylated (N-linked (GlcNAc...) asparagine). A helical membrane pass occupies residues 387–407 (GLIYLALFSFVTALMFSSIVC). The Cytoplasmic segment spans residues 408–523 (SVPHTWQQKR…QPRPDSSGSH (116 aa)). Disordered stretches follow at residues 413–435 (WQQK…RQAH) and 482–523 (QNPR…SGSH). Position 496 is a phosphoserine (S496). The PY-motif; mediates interaction with NEDD4L signature appears at 498-501 (PPSY). A compositionally biased stretch (polar residues) spans 501–523 (YTSSMRAKYLATSQPRPDSSGSH). Phosphoserine is present on residues S504 and S522.

Belongs to the tweety family. As to quaternary structure, homotetramer; disulfide-linked. Homodimer. Interacts with NEDD4L. Post-translationally, ubiquitinated by NEDD4L. N-Glycosylated. Contains high-mannose, hybrid and complex oligosaccharides. As to expression, expressed in excitable tissues. Expressed in the brain, heart, skeletal muscle, colon, spleen, kidney and peripheral blood leukocytes.

It is found in the cell membrane. It catalyses the reaction chloride(in) = chloride(out). The catalysed reaction is L-glutamate(out) = L-glutamate(in). Functionally, calcium-independent, swelling-dependent volume-regulated anion channel (VRAC-swell) which plays a pivotal role in the process of regulatory volume decrease (RVD) in the brain through the efflux of anions like chloride and organic osmolytes like glutamate. Probable large-conductance Ca(2+)-activated chloride channel. The chain is Protein tweety homolog 3 (TTYH3) from Homo sapiens (Human).